A 185-amino-acid polypeptide reads, in one-letter code: CDP-diacylglycerol--glycerol-3-phosphate 3-phosphatidyltransferase (185 aa).

The next 4 membrane-spanning stretches (helical) occupy residues 7-26, 33-52, 89-108, and 151-172; these read IFLTIFRVILIPFFVIAFYL, FITTLIFFIAGVTDWLDGYL, FWITIPAIIMISREIIISAL, and IAAIILLYIAAILTIWSMIQYL.

Belongs to the CDP-alcohol phosphatidyltransferase class-I family.

The protein localises to the cell membrane. It carries out the reaction a CDP-1,2-diacyl-sn-glycerol + sn-glycerol 3-phosphate = a 1,2-diacyl-sn-glycero-3-phospho-(1'-sn-glycero-3'-phosphate) + CMP + H(+). Its pathway is phospholipid metabolism; phosphatidylglycerol biosynthesis; phosphatidylglycerol from CDP-diacylglycerol: step 1/2. Functionally, this protein catalyzes the committed step to the synthesis of the acidic phospholipids. The chain is CDP-diacylglycerol--glycerol-3-phosphate 3-phosphatidyltransferase (pgsA) from Haemophilus influenzae (strain ATCC 51907 / DSM 11121 / KW20 / Rd).